A 573-amino-acid polypeptide reads, in one-letter code: Chaperone Ric-8 (573 aa).

Residues Glu308–Glu324 show a composition bias toward basic and acidic residues. 2 disordered regions span residues Glu308–Ala329 and Gly473–Gln493. Ser477, Ser478, Ser480, and Ser483 each carry phosphoserine.

It belongs to the synembryn family. As to quaternary structure, interacts with GDP-bound G(i)-alpha protein G-i-alpha-65A. Does not interact with G-alpha proteins when they are in complex with subunits beta and gamma. Interacts with Frq2 in a Ca(2+)-independent manner but does not interact with Frq1. In terms of tissue distribution, expression in the embryo is primarily neural.

The protein localises to the cytoplasm. It is found in the cell cortex. Its subcellular location is the presynapse. In terms of biological role, chaperone that specifically binds and folds some, but not all, nascent G alpha proteins prior to G protein heterotrimer formation, promoting their stability and activity. Also acts as a guanine nucleotide exchange factor (GEF) for G alpha proteins by stimulating exchange of bound GDP for free GTP. Plays a key role in asymmetric spindle positioning, a step for asymmetric cell division that generates cell diversity during development by activating G(i) alpha protein independently of G-protein coupled receptors. Required during gastrulation and sensory organ precursor (SOP) formation. Plays a role in positively regulating synapse number and neurotransmitter release. The chain is Chaperone Ric-8 (ric8a) from Drosophila melanogaster (Fruit fly).